Consider the following 836-residue polypeptide: Probable ribonuclease ZC3H12B (836 aa).

Residues 1 to 92 (MTATAEVETP…SPCLDRPSFS (92 aa)) are disordered. Positions 8–28 (ETPKMEKSASKEEKQQPKQDS) are enriched in basic and acidic residues. Residues 35-46 (DSEEWMSSESDP) are compositionally biased toward acidic residues. A compositionally biased stretch (polar residues) spans 50–60 (SLKSSDNSKSC). The span at 70-80 (KEMHSKPHRQL) shows a compositional bias: basic residues. In terms of domain architecture, RNase NYN spans 190 to 345 (LRPVVIDGSN…LGRHGPSLEN (156 aa)). The C3H1-type zinc-finger motif lies at 355 to 380 (EHKKQPCPYGKKCTYGHKCKYYHPER).

This sequence belongs to the ZC3H12 family. The cofactor is Mg(2+).

Functionally, may function as RNase and regulate the levels of target RNA species. The protein is Probable ribonuclease ZC3H12B (ZC3H12B) of Homo sapiens (Human).